The following is a 424-amino-acid chain: GTPase Obg (424 aa).

Residues 1-158 (MFIDTAKIFV…RWIKLELKLL (158 aa)) enclose the Obg domain. Residues 159–331 (ADVGLIGFPN…LMKEAARLLS (173 aa)) enclose the OBG-type G domain. GTP-binding positions include 165 to 172 (GFPNVGKS), 190 to 194 (FTTLK), 212 to 215 (DIPG), 282 to 285 (NKSD), and 312 to 314 (SAA). Mg(2+) contacts are provided by Ser-172 and Thr-192. The region spanning 345 to 424 (RFIEEEKRFT…LNDFEFDFLL (80 aa)) is the OCT domain.

This sequence belongs to the TRAFAC class OBG-HflX-like GTPase superfamily. OBG GTPase family. Monomer. The cofactor is Mg(2+).

It is found in the cytoplasm. Functionally, an essential GTPase which binds GTP, GDP and possibly (p)ppGpp with moderate affinity, with high nucleotide exchange rates and a fairly low GTP hydrolysis rate. Plays a role in control of the cell cycle, stress response, ribosome biogenesis and in those bacteria that undergo differentiation, in morphogenesis control. The chain is GTPase Obg from Clostridium botulinum (strain Okra / Type B1).